The chain runs to 820 residues: Leucine--tRNA ligase (820 aa).

Residues 40–51 (PYPSGAGLHVGH) carry the 'HIGH' region motif. Positions 601 to 605 (KMSKS) match the 'KMSKS' region motif. Lysine 604 lines the ATP pocket.

Belongs to the class-I aminoacyl-tRNA synthetase family.

It is found in the cytoplasm. It catalyses the reaction tRNA(Leu) + L-leucine + ATP = L-leucyl-tRNA(Leu) + AMP + diphosphate. The sequence is that of Leucine--tRNA ligase from Chlamydia pneumoniae (Chlamydophila pneumoniae).